Here is a 456-residue protein sequence, read N- to C-terminus: Putative F-box/LRR-repeat protein At3g18150 (456 aa).

Residues 30–78 (VDSISSLPDVILQHILSFIPTKLAITTSLLSKRWRHVWCDTPSLSFNDY) enclose the F-box domain. LRR repeat units follow at residues 177 to 202 (TCLL…TLDH), 203 to 213 (CGGLRVLDLSK), 228 to 253 (VPEL…KLPC), 278 to 303 (KADF…TLGG), 333 to 358 (IFQY…TLLT), and 396 to 422 (CLDV…DKMV).

The chain is Putative F-box/LRR-repeat protein At3g18150 from Arabidopsis thaliana (Mouse-ear cress).